We begin with the raw amino-acid sequence, 246 residues long: NAD-dependent protein deacylase (246 aa).

The region spanning 1 to 237 is the Deacetylase sirtuin-type domain; it reads MSLPYRHVVI…PRLVEEILAA (237 aa). 13 to 32 contacts NAD(+); that stretch reads GAGISAESGIQTFRAQDGLW. Substrate is bound by residues Y57 and R60. 94 to 97 contributes to the NAD(+) binding site; the sequence is QNID. H112 acts as the Proton acceptor in catalysis. Residues C120 and C139 each contribute to the Zn(2+) site. Residues 179 to 181, 205 to 207, and A223 each bind NAD(+); these read GTS and NLE.

This sequence belongs to the sirtuin family. Class III subfamily. Zn(2+) is required as a cofactor.

The protein localises to the cytoplasm. The catalysed reaction is N(6)-acetyl-L-lysyl-[protein] + NAD(+) + H2O = 2''-O-acetyl-ADP-D-ribose + nicotinamide + L-lysyl-[protein]. It catalyses the reaction N(6)-succinyl-L-lysyl-[protein] + NAD(+) + H2O = 2''-O-succinyl-ADP-D-ribose + nicotinamide + L-lysyl-[protein]. In terms of biological role, NAD-dependent lysine deacetylase and desuccinylase that specifically removes acetyl and succinyl groups on target proteins. Modulates the activities of several proteins which are inactive in their acylated form. The chain is NAD-dependent protein deacylase from Vibrio cholerae serotype O1 (strain ATCC 39315 / El Tor Inaba N16961).